The sequence spans 127 residues: Large ribosomal subunit protein bL20 (127 aa).

The protein belongs to the bacterial ribosomal protein bL20 family.

Functionally, binds directly to 23S ribosomal RNA and is necessary for the in vitro assembly process of the 50S ribosomal subunit. It is not involved in the protein synthesizing functions of that subunit. This chain is Large ribosomal subunit protein bL20, found in Bifidobacterium longum (strain DJO10A).